We begin with the raw amino-acid sequence, 846 residues long: Neurofilament medium polypeptide (846 aa).

Polar residues predominate over residues 1–10; the sequence is MSYTLDSLGN. Residues 1–52 are disordered; sequence MSYTLDSLGNPSAYRRVPTETRSSFSRVSGSPSSGFRSQSWSRGSPSTVSSS. An N-acetylserine modification is found at Ser-2. The segment at 2 to 104 is head; sequence SYTLDSLGNP…LSRSNEKEQL (103 aa). Residues 22 to 45 show a composition bias toward low complexity; it reads RSSFSRVSGSPSSGFRSQSWSRGS. At Ser-31 the chain carries Phosphoserine. An Omega-N-methylarginine modification is found at Arg-43. A glycan (O-linked (GlcNAc) threonine) is linked at Thr-48. Ser-98 carries the phosphoserine modification. Residues 100–411 form the IF rod domain; the sequence is EKEQLQGLND…KLLEGEETRF (312 aa). Residues 104–135 are coil 1A; that stretch reads LQGLNDRFAGYIEKVHYLEQQNKEIEAEIHAL. Residues 136 to 148 are linker 1; that stretch reads RQKQASHAQLGDA. The segment at 149–247 is coil 1B; the sequence is YDQEIRELRA…EEEVADLLAQ (99 aa). Phosphoserine is present on Ser-225. Positions 248-264 are linker 12; it reads IQASHITVERKDYLKTD. The tract at residues 265 to 286 is coil 2A; the sequence is ISTALKEIRSQLECHSDQNMHQ. Residues 287–290 form a linker 2 region; it reads AEEW. Positions 291–411 are coil 2B; that stretch reads FKCRYAKLTE…KLLEGEETRF (121 aa). Tyr-319 carries the post-translational modification Phosphotyrosine. Phosphoserine occurs at positions 345, 417, and 429. Positions 412 to 845 are tail; it reads STFSGSITGP…HAIVKEVTQG (434 aa). Thr-431 carries an O-linked (GlcNAc) threonine glycan. Phosphoserine occurs at positions 467 and 483. Positions 483 to 783 are disordered; that stretch reads SAKEEKEEAE…GEDRSDDKVV (301 aa). Positions 489-499 are enriched in acidic residues; that stretch reads EEAEEKEEEPE. Residues 500–510 are compositionally biased toward basic and acidic residues; sequence VEKSPVKSPEA. Phosphoserine is present on residues Ser-503 and Ser-507. Over residues 511–533 the composition is skewed to acidic residues; sequence KEEEEGEKEEEEEGQEEEEEEDE. The segment covering 534–553 has biased composition (basic and acidic residues); that stretch reads GVKSDQAEEGGSEKEGSSEK. Phosphoserine is present on residues Ser-537, Ser-545, Ser-550, and Ser-551. Positions 554 to 575 are enriched in acidic residues; the sequence is DEGEQEEEGETEAEGEGEEAEA. The residue at position 564 (Thr-564) is a Phosphothreonine. A compositionally biased stretch (basic and acidic residues) spans 576–603; the sequence is KEEKKTEGKVEEMAIKEEIKVEKPEKAK. Residues Ser-604, Ser-609, Ser-643, Ser-667, Ser-687, Ser-713, Ser-721, Ser-751, and Ser-767 each carry the phosphoserine modification. 2 stretches are compositionally biased toward basic and acidic residues: residues 610–675 and 687–709; these read PVEE…KAVE and SLEKDTKEEKPQQQEKVKEKAEE. 2 stretches are compositionally biased toward basic and acidic residues: residues 718–730 and 746–758; these read GDKSPQESKKEDI and TQEKGSGQEEEKG. Positions 769–783 are enriched in basic and acidic residues; that stretch reads AEEKKGEDRSDDKVV.

It belongs to the intermediate filament family. Forms heterodimers with NEFL; which can further hetero-oligomerize (in vitro). Forms heterodimers with INA (in vitro). There are a number of repeats of the tripeptide K-S-P, NFM is phosphorylated on a number of the serines in this motif. It is thought that phosphorylation of NFM results in the formation of interfilament cross bridges that are important in the maintenance of axonal caliber. Post-translationally, phosphorylation seems to play a major role in the functioning of the larger neurofilament polypeptides (NF-M and NF-H), the levels of phosphorylation being altered developmentally and coincidentally with a change in the neurofilament function. In terms of processing, phosphorylated in the head and rod regions by the PKC kinase PKN1, leading to the inhibition of polymerization. As to expression, expressed in the dorsal root ganglion neurons (at protein level).

It localises to the cytoplasm. The protein resides in the cytoskeleton. The protein localises to the cell projection. Its subcellular location is the axon. Its function is as follows. Neurofilaments usually contain three intermediate filament proteins: NEFL, NEFM, and NEFH which are involved in the maintenance of neuronal caliber. May additionally cooperate with the neuronal intermediate filament proteins PRPH and INA to form neuronal filamentous networks. The chain is Neurofilament medium polypeptide (Nefm) from Rattus norvegicus (Rat).